The sequence spans 339 residues: Fructose-1,6-bisphosphatase class 1 (339 aa).

4 residues coordinate Mg(2+): glutamate 92, aspartate 114, leucine 116, and aspartate 117. Substrate-binding positions include 117-120 (DGSS), asparagine 209, and lysine 275. Position 281 (glutamate 281) interacts with Mg(2+).

Belongs to the FBPase class 1 family. Homotetramer. Mg(2+) serves as cofactor.

The protein resides in the cytoplasm. The enzyme catalyses beta-D-fructose 1,6-bisphosphate + H2O = beta-D-fructose 6-phosphate + phosphate. It functions in the pathway carbohydrate biosynthesis; gluconeogenesis. The sequence is that of Fructose-1,6-bisphosphatase class 1 from Acidithiobacillus ferrooxidans (strain ATCC 53993 / BNL-5-31) (Leptospirillum ferrooxidans (ATCC 53993)).